Reading from the N-terminus, the 193-residue chain is ATP-dependent Clp protease proteolytic subunit (193 aa).

Ser98 functions as the Nucleophile in the catalytic mechanism. The active site involves His123.

The protein belongs to the peptidase S14 family. Fourteen ClpP subunits assemble into 2 heptameric rings which stack back to back to give a disk-like structure with a central cavity, resembling the structure of eukaryotic proteasomes.

Its subcellular location is the cytoplasm. It carries out the reaction Hydrolysis of proteins to small peptides in the presence of ATP and magnesium. alpha-casein is the usual test substrate. In the absence of ATP, only oligopeptides shorter than five residues are hydrolyzed (such as succinyl-Leu-Tyr-|-NHMec, and Leu-Tyr-Leu-|-Tyr-Trp, in which cleavage of the -Tyr-|-Leu- and -Tyr-|-Trp bonds also occurs).. Cleaves peptides in various proteins in a process that requires ATP hydrolysis. Has a chymotrypsin-like activity. Plays a major role in the degradation of misfolded proteins. In Pasteurella multocida (strain Pm70), this protein is ATP-dependent Clp protease proteolytic subunit.